Reading from the N-terminus, the 115-residue chain is MRYVASYLLAALGGNSSPSAKDIKKILDSVGIEADDDRLNKVISELNGKNIEDVIAQGVGKLASVPAGGAVAVSAAPGSAAPAAGSAPAAAEEKKDEKKEESEESDDDMGFGLFD.

N-acetylmethionine is present on methionine 1. 2 positions are modified to phosphoserine: serine 17 and serine 19. Lysine 21 carries the N6-acetyllysine; alternate modification. Position 21 is an N6-succinyllysine; alternate (lysine 21). Residues 76–90 (APGSAAPAAGSAPAA) are compositionally biased toward low complexity. The disordered stretch occupies residues 76–115 (APGSAAPAAGSAPAAAEEKKDEKKEESEESDDDMGFGLFD). A phosphoserine mark is found at serine 79 and serine 86. Basic and acidic residues predominate over residues 91–101 (AEEKKDEKKEE). A phosphoserine mark is found at serine 102 and serine 105.

This sequence belongs to the eukaryotic ribosomal protein P1/P2 family. Heterodimer with RPLP1 at the lateral ribosomal stalk of the large ribosomal subunit.

Functionally, plays an important role in the elongation step of protein synthesis. The protein is Large ribosomal subunit protein P2 (Rplp2) of Mus musculus (Mouse).